The following is a 341-amino-acid chain: Glycerol-3-phosphate dehydrogenase [NAD(P)+] (341 aa).

NADPH contacts are provided by S14, F15, R35, and K108. K108 and G136 together coordinate sn-glycerol 3-phosphate. A140 is a binding site for NADPH. Residues K191, D244, S254, R255, and N256 each coordinate sn-glycerol 3-phosphate. The active-site Proton acceptor is the K191. R255 is a binding site for NADPH. Residues V279 and E281 each contribute to the NADPH site.

This sequence belongs to the NAD-dependent glycerol-3-phosphate dehydrogenase family.

Its subcellular location is the cytoplasm. It catalyses the reaction sn-glycerol 3-phosphate + NAD(+) = dihydroxyacetone phosphate + NADH + H(+). It carries out the reaction sn-glycerol 3-phosphate + NADP(+) = dihydroxyacetone phosphate + NADPH + H(+). It participates in membrane lipid metabolism; glycerophospholipid metabolism. In terms of biological role, catalyzes the reduction of the glycolytic intermediate dihydroxyacetone phosphate (DHAP) to sn-glycerol 3-phosphate (G3P), the key precursor for phospholipid synthesis. This chain is Glycerol-3-phosphate dehydrogenase [NAD(P)+], found in Pseudomonas entomophila (strain L48).